We begin with the raw amino-acid sequence, 583 residues long: Protein cps3 (583 aa).

C3H1-type zinc fingers lie at residues 35–62 (SLQH…HDLE) and 64–91 (ATEK…HVLP). 3 disordered regions span residues 318–346 (LGRP…NGST), 471–490 (KVSS…YNGT), and 504–532 (RQES…KNLG). Composition is skewed to polar residues over residues 323–334 (KSPSVPTSVGSN), 475–490 (NLNS…YNGT), and 513–532 (PSLN…KNLG).

It is found in the cytoplasm. Functionally, responsible for supersensitivity to the spindle poison, isopropyl N-3-chlorophenyl carbamate. Has a role in meiosis. The sequence is that of Protein cps3 (cps3) from Schizosaccharomyces pombe (strain 972 / ATCC 24843) (Fission yeast).